Reading from the N-terminus, the 234-residue chain is Probable transcriptional regulatory protein Psyr_3028 (234 aa).

This sequence belongs to the TACO1 family.

The protein localises to the cytoplasm. The sequence is that of Probable transcriptional regulatory protein Psyr_3028 from Pseudomonas syringae pv. syringae (strain B728a).